The sequence spans 471 residues: Glutamate--tRNA ligase 2 (471 aa).

The 'HIGH' region motif lies at proline 15–glycine 25. Residues lysine 243–arginine 247 carry the 'KMSKS' region motif. Lysine 246 lines the ATP pocket.

The protein belongs to the class-I aminoacyl-tRNA synthetase family. Glutamate--tRNA ligase type 1 subfamily. In terms of assembly, monomer.

It is found in the cytoplasm. It carries out the reaction tRNA(Glu) + L-glutamate + ATP = L-glutamyl-tRNA(Glu) + AMP + diphosphate. Functionally, catalyzes the attachment of glutamate to tRNA(Glu) in a two-step reaction: glutamate is first activated by ATP to form Glu-AMP and then transferred to the acceptor end of tRNA(Glu). This Cereibacter sphaeroides (strain ATCC 17025 / ATH 2.4.3) (Rhodobacter sphaeroides) protein is Glutamate--tRNA ligase 2.